The following is a 638-amino-acid chain: 1,4-alpha-glucan branching enzyme GlgB (638 aa).

The active-site Nucleophile is the aspartate 303. The active-site Proton donor is the glutamate 356.

The protein belongs to the glycosyl hydrolase 13 family. GlgB subfamily. Monomer.

It catalyses the reaction Transfers a segment of a (1-&gt;4)-alpha-D-glucan chain to a primary hydroxy group in a similar glucan chain.. The protein operates within glycan biosynthesis; glycogen biosynthesis. In terms of biological role, catalyzes the formation of the alpha-1,6-glucosidic linkages in glycogen by scission of a 1,4-alpha-linked oligosaccharide from growing alpha-1,4-glucan chains and the subsequent attachment of the oligosaccharide to the alpha-1,6 position. The protein is 1,4-alpha-glucan branching enzyme GlgB of Lactobacillus acidophilus (strain ATCC 700396 / NCK56 / N2 / NCFM).